The chain runs to 242 residues: 1-(5-phosphoribosyl)-5-[(5-phosphoribosylamino)methylideneamino] imidazole-4-carboxamide isomerase (242 aa).

Asp-8 acts as the Proton acceptor in catalysis. Asp-129 acts as the Proton donor in catalysis.

The protein belongs to the HisA/HisF family.

It localises to the cytoplasm. The enzyme catalyses 1-(5-phospho-beta-D-ribosyl)-5-[(5-phospho-beta-D-ribosylamino)methylideneamino]imidazole-4-carboxamide = 5-[(5-phospho-1-deoxy-D-ribulos-1-ylimino)methylamino]-1-(5-phospho-beta-D-ribosyl)imidazole-4-carboxamide. Its pathway is amino-acid biosynthesis; L-histidine biosynthesis; L-histidine from 5-phospho-alpha-D-ribose 1-diphosphate: step 4/9. The chain is 1-(5-phosphoribosyl)-5-[(5-phosphoribosylamino)methylideneamino] imidazole-4-carboxamide isomerase from Erythrobacter litoralis (strain HTCC2594).